Consider the following 1560-residue polypeptide: Tenascin-N (1560 aa).

Positions 1–26 are cleaved as a signal peptide; sequence MGLWGMLAFPLGFLLASVLLVASAPA. EGF-like domains follow at residues 167 to 198, 199 to 229, and 230 to 260; these read DQPTCPGACNGHGRCVDGQCVCDAPYVGVDCA, YAACPQDCSGHGVCVQGVCQCHEDFTAEDCS, and EQRCPGDCSGNGFCDTGECYCEMGFTGPDCS. Intrachain disulfides connect Cys171–Cys181, Cys175–Cys186, Cys188–Cys197, Cys202–Cys212, Cys206–Cys217, Cys219–Cys228, Cys233–Cys243, Cys237–Cys248, and Cys250–Cys259. 12 consecutive Fibronectin type-III domains span residues 264–353, 354–444, 445–532, 533–622, 623–706, 709–798, 799–882, 885–970, 973–1062, 1063–1144, 1149–1238, and 1239–1325; these read APQG…DLAV, VGTA…TEID, GPTN…TEID, SPEN…IDSP, KNLV…APTD, GPKN…IDSP, GPKN…APTD, SPKN…IDSP, KNLV…TKAP, SPKN…IDPP, and RNLR…VDAR. Disordered regions lie at residues 868–888 and 1044–1063; these read GTQESRKTSTKAPTDIDGPKN and GARESKKANTEGHTDIDSPK. Positions 1044–1061 are enriched in basic and acidic residues; that stretch reads GARESKKANTEGHTDIDS. Positions 1323-1540 constitute a Fibrinogen C-terminal domain; it reads DARFPHPSDC…YVELKIRPFG (218 aa). N-linked (GlcNAc...) asparagine glycosylation is present at Asn1411.

It belongs to the tenascin family. In terms of assembly, homohexamer. As to expression, highest expression in kidney followed by spleen and brain. In brain, highest expression is found in hippocampus, cerebellum and olfactory bulb. Expressed in aortic valve, corneal limbus. Expressed in ribs periosteum. During a fracture repair process, expression increases in cells of newly formed perichondrium/peristeum surrounding the cartalaginous callus.

The protein localises to the secreted. It is found in the extracellular space. It localises to the extracellular matrix. Its function is as follows. Extracellular matrix protein that seems to be a ligand for ITGA8:ITGB1, ITGAV:ITGB1 and ITGA4:ITGB1. Involved in neurite outgrowth and cell migration in hippocampal explants. During endochondral bone formation, inhibits proliferation and differentiation of proteoblasts mediated by canonical WNT signaling. In tumors, stimulates angiogenesis by elongation, migration and sprouting of endothelial cells. Expressed in most mammary tumors, may facilitate tumorigenesis by supporting the migratory behavior of breast cancer cells. The sequence is that of Tenascin-N from Mus musculus (Mouse).